The chain runs to 314 residues: uncharacterized protein (314 aa).

A run of 2 helical transmembrane segments spans residues 23–43 (LALGPVHPGGPTLIDLLMALF) and 98–118 (MASGIGGALSGALGGVMGPLT). The segment covering 165-184 (GLGSGAGGGDVGGGGAGGTT) has biased composition (gly residues). Positions 165–314 (GLGSGAGGGD…APDEKTDAGE (150 aa)) are disordered. Pro residues predominate over residues 190–202 (GPPPVPTSSPPTT). Composition is skewed to low complexity over residues 203-212 (PAGAPTKSAT) and 219-232 (ASPASAHMGAAGMP). Residues 221–241 (PASAHMGAAGMPMVPPGAMGA) traverse the membrane as a helical segment. Over residues 294 to 314 (LLPEHKDFGRIAPDEKTDAGE) the composition is skewed to basic and acidic residues.

The protein resides in the cell membrane. This is an uncharacterized protein from Mycobacterium tuberculosis (strain CDC 1551 / Oshkosh).